A 308-amino-acid polypeptide reads, in one-letter code: Uridylate cyclase (308 aa).

Mn(2+)-binding residues include Asp62 and Asp106.

The protein belongs to the adenylyl cyclase class-4/guanylyl cyclase family. Pyrimidine cyclase subfamily. In terms of assembly, homodimer. Mn(2+) is required as a cofactor.

Its subcellular location is the cytoplasm. It carries out the reaction GTP = 3',5'-cyclic GMP + diphosphate. It catalyses the reaction UTP = 3',5'-cyclic UMP + diphosphate. Functionally, pycsar (pyrimidine cyclase system for antiphage resistance) provides immunity against bacteriophage. The pyrimidine cyclase (PycC) synthesizes cyclic nucleotides in response to infection; these serve as specific second messenger signals. The signals activate the adjacent effector, leading to bacterial cell death and abortive phage infection. A clade D Pycsar system. Its function is as follows. The pyrimidine cyclase gene of a two-gene Pycsar system, generates cyclic UMP (cUMP) from UTP as well as cGMP from GTP to a lesser extent, has little to no activity on ATP or CTP. Expression of this and adjacent effector PtPycTM (AC A0A4Q9KQH5) probably confers resistance to bacteriophage. The genes are probably only expressed in response to bacteriophage infection. The sequence is that of Uridylate cyclase from Propioniciclava tarda.